Reading from the N-terminus, the 356-residue chain is Phosphoribosylformylglycinamidine cyclo-ligase (356 aa).

This sequence belongs to the AIR synthase family.

It is found in the cytoplasm. The enzyme catalyses 2-formamido-N(1)-(5-O-phospho-beta-D-ribosyl)acetamidine + ATP = 5-amino-1-(5-phospho-beta-D-ribosyl)imidazole + ADP + phosphate + H(+). It participates in purine metabolism; IMP biosynthesis via de novo pathway; 5-amino-1-(5-phospho-D-ribosyl)imidazole from N(2)-formyl-N(1)-(5-phospho-D-ribosyl)glycinamide: step 2/2. The protein is Phosphoribosylformylglycinamidine cyclo-ligase of Sinorhizobium fredii (strain NBRC 101917 / NGR234).